A 457-amino-acid polypeptide reads, in one-letter code: Argininosuccinate lyase (457 aa).

The protein belongs to the lyase 1 family. Argininosuccinate lyase subfamily.

It localises to the cytoplasm. The enzyme catalyses 2-(N(omega)-L-arginino)succinate = fumarate + L-arginine. It functions in the pathway amino-acid biosynthesis; L-arginine biosynthesis; L-arginine from L-ornithine and carbamoyl phosphate: step 3/3. This chain is Argininosuccinate lyase, found in Escherichia coli O7:K1 (strain IAI39 / ExPEC).